The following is a 490-amino-acid chain: Proline--tRNA ligase (490 aa).

This sequence belongs to the class-II aminoacyl-tRNA synthetase family. ProS type 3 subfamily. As to quaternary structure, homodimer.

Its subcellular location is the cytoplasm. The catalysed reaction is tRNA(Pro) + L-proline + ATP = L-prolyl-tRNA(Pro) + AMP + diphosphate. Its function is as follows. Catalyzes the attachment of proline to tRNA(Pro) in a two-step reaction: proline is first activated by ATP to form Pro-AMP and then transferred to the acceptor end of tRNA(Pro). This is Proline--tRNA ligase from Salinibacter ruber (strain DSM 13855 / M31).